Consider the following 317-residue polypeptide: Beta-ketoacyl-[acyl-carrier-protein] synthase III (317 aa).

Catalysis depends on residues C112 and H244. The tract at residues 245 to 249 (QANLR) is ACP-binding. The active site involves N274.

Belongs to the thiolase-like superfamily. FabH family. In terms of assembly, homodimer.

Its subcellular location is the cytoplasm. The catalysed reaction is malonyl-[ACP] + acetyl-CoA + H(+) = 3-oxobutanoyl-[ACP] + CO2 + CoA. The protein operates within lipid metabolism; fatty acid biosynthesis. In terms of biological role, catalyzes the condensation reaction of fatty acid synthesis by the addition to an acyl acceptor of two carbons from malonyl-ACP. Catalyzes the first condensation reaction which initiates fatty acid synthesis and may therefore play a role in governing the total rate of fatty acid production. Possesses both acetoacetyl-ACP synthase and acetyl transacylase activities. Its substrate specificity determines the biosynthesis of branched-chain and/or straight-chain of fatty acids. The chain is Beta-ketoacyl-[acyl-carrier-protein] synthase III from Salmonella arizonae (strain ATCC BAA-731 / CDC346-86 / RSK2980).